Reading from the N-terminus, the 389-residue chain is Chalcone synthase (389 aa).

Active-site residues include Cys164, His303, and Asn336.

This sequence belongs to the thiolase-like superfamily. Chalcone/stilbene synthases family. In terms of assembly, homodimer. Mainly expressed in flowers, to a lower extent in young leaves, and barely in mature leaves and twigs.

The enzyme catalyses (E)-4-coumaroyl-CoA + 3 malonyl-CoA + 3 H(+) = 2',4,4',6'-tetrahydroxychalcone + 3 CO2 + 4 CoA. It functions in the pathway secondary metabolite biosynthesis; flavonoid biosynthesis. The primary product of this enzyme is 4,2',4',6'-tetrahydroxychalcone (also termed naringenin-chalcone or chalcone) which can under specific conditions spontaneously isomerize into naringenin. In Rhododendron dauricum (Azalea daurica), this protein is Chalcone synthase.